Consider the following 332-residue polypeptide: Transaldolase (332 aa).

K136 functions as the Schiff-base intermediate with substrate in the catalytic mechanism.

Belongs to the transaldolase family. Type 1 subfamily.

Its subcellular location is the cytoplasm. The enzyme catalyses D-sedoheptulose 7-phosphate + D-glyceraldehyde 3-phosphate = D-erythrose 4-phosphate + beta-D-fructose 6-phosphate. The protein operates within carbohydrate degradation; pentose phosphate pathway; D-glyceraldehyde 3-phosphate and beta-D-fructose 6-phosphate from D-ribose 5-phosphate and D-xylulose 5-phosphate (non-oxidative stage): step 2/3. Its function is as follows. Transaldolase is important for the balance of metabolites in the pentose-phosphate pathway. This is Transaldolase from Trichormus variabilis (strain ATCC 29413 / PCC 7937) (Anabaena variabilis).